We begin with the raw amino-acid sequence, 331 residues long: Peroxisomal nicotinamide adenine dinucleotide carrier (331 aa).

Solcar repeat units lie at residues 2–91 (SDAL…FRNR), 109–216 (VGMF…MLTK), and 229–320 (VTAL…LVKG). The next 6 membrane-spanning stretches (helical) occupy residues 5–25 (LING…TYPL), 63–85 (LYGG…YYFY), 116–136 (LVAA…WVIV), 180–200 (VYDE…LIMV), 235–255 (FLLG…LLVV), and 293–313 (YKGM…LFMI).

Belongs to the mitochondrial carrier (TC 2.A.29) family. As to quaternary structure, homodimer. As to expression, expressed in cotyledons, hypocotyls, vascular tissues, trichomes, hydathodes, seeds, pedicels, flowers and stigma.

The protein resides in the glyoxysome membrane. With respect to regulation, inhibited by pyridoxal 5'-phosphate, bathophenanthroline, tannic acid, mersalyl, mercuric chloride and bromocresol purple. Its function is as follows. Mediates the NAD(+) import into peroxisomes. Favors the NAD(+)(in)/AMP(out) antiport exchange, but is also able to catalyze a low unidirectional transport that might be essential under special conditions. Transports CoA, dephospho-CoA, acetyl-CoA, adenosine 3',5'-diphosphate (PAP), NAD(+), AMP, ADP and NADH, but has no activity with ATP, GTP, GDP, NADPH, NADP(+) or FAD. Required for peroxisomes proliferation. The polypeptide is Peroxisomal nicotinamide adenine dinucleotide carrier (PXN) (Arabidopsis thaliana (Mouse-ear cress)).